A 1295-amino-acid polypeptide reads, in one-letter code: Phosphoribosylformylglycinamidine synthase (1295 aa).

The segment at 302–327 is disordered; that stretch reads SPWPGASTGSGGEIRDEGATGRGAKP. Residues 306–317 and A677 each bind ATP; that span reads GASTGSGGEIRD. D678, E717, N721, and D884 together coordinate Mg(2+). Residue S886 participates in ATP binding. Positions 1042–1295 constitute a Glutamine amidotransferase type-1 domain; that stretch reads VAVLREQGVN…IFRNARKQLG (254 aa). The active-site Nucleophile is C1135. Catalysis depends on residues H1260 and E1262.

This sequence in the N-terminal section; belongs to the FGAMS family. Monomer.

The protein localises to the cytoplasm. The enzyme catalyses N(2)-formyl-N(1)-(5-phospho-beta-D-ribosyl)glycinamide + L-glutamine + ATP + H2O = 2-formamido-N(1)-(5-O-phospho-beta-D-ribosyl)acetamidine + L-glutamate + ADP + phosphate + H(+). The protein operates within purine metabolism; IMP biosynthesis via de novo pathway; 5-amino-1-(5-phospho-D-ribosyl)imidazole from N(2)-formyl-N(1)-(5-phospho-D-ribosyl)glycinamide: step 1/2. Functionally, phosphoribosylformylglycinamidine synthase involved in the purines biosynthetic pathway. Catalyzes the ATP-dependent conversion of formylglycinamide ribonucleotide (FGAR) and glutamine to yield formylglycinamidine ribonucleotide (FGAM) and glutamate. The sequence is that of Phosphoribosylformylglycinamidine synthase from Photorhabdus laumondii subsp. laumondii (strain DSM 15139 / CIP 105565 / TT01) (Photorhabdus luminescens subsp. laumondii).